Here is a 542-residue protein sequence, read N- to C-terminus: Signal peptide peptidase-like 5 (542 aa).

A signal peptide spans 1–23; that stretch reads MAAATAAVFALLMASALAGAAAG. Residues 24–192 lie on the Lumenal side of the membrane; the sequence is GDIVHHDDEA…PDRPVVDTAE (169 aa). N-linked (GlcNAc...) asparagine glycans are attached at residues asparagine 79 and asparagine 145. The 76-residue stretch at 92-167 folds into the PA domain; the sequence is CTSPKEKVSG…LPRDAGFALH (76 aa). The chain crosses the membrane as a helical span at residues 193–213; it reads VFLWLMAVGTVLCASYWSAWS. Topologically, residues 214–245 are cytoplasmic; that stretch reads AREALCEQEKLLKDGREVLLNVENGSSSGMID. The chain crosses the membrane as a helical span at residues 246 to 266; it reads INVASAIMFVVVASCFLIMLY. Over 267-275 the chain is Lumenal; it reads KMMSSWFVE. A helical transmembrane segment spans residues 276–296; that stretch reads LLVVIFCVGGVEGLQTCLVAL. Over 297 to 316 the chain is Cytoplasmic; sequence LSRWFRAASESFFKVPFFGA. The chain crosses the membrane as a helical span at residues 317–337; that stretch reads VSYLTLAVSPFCIVFAVLWAV. At 338–342 the chain is on the lumenal side; sequence HRHFT. The chain crosses the membrane as a helical span at residues 343-363; that stretch reads YAWIGQDILGIALIITVIQIV. Over 364 to 367 the chain is Cytoplasmic; the sequence is RVPN. The chain crosses the membrane as a helical span at residues 368 to 388; sequence LKVGSVLLSCAFFYDIFWVFV. Residue aspartate 382 is part of the active site. Over 389-426 the chain is Lumenal; the sequence is SKRWFHESVMIVVARGDKTDEDGVPMLLKIPRMFDPWG. The chain crosses the membrane as a helical span at residues 427-447; it reads GYSIIGFGDILLPGLLVAFAL. Residue aspartate 435 is part of the active site. The Cytoplasmic portion of the chain corresponds to 448-459; the sequence is RYDWAAKKSLQT. Residues 460–480 traverse the membrane as a helical segment; sequence GYFLWSMVAYGSGLLITYVAL. The Lumenal segment spans residues 481 to 486; sequence NLMDGH. Residues 487 to 507 form a helical membrane-spanning segment; that stretch reads GQPALLYIVPFTLGALISLGW. The PAL signature appears at 489–491; the sequence is PAL. At 508-542 the chain is on the cytoplasmic side; it reads KRGELWNLWSKGEPERVCPHHMHMQPQPKTPPLVQ.

Belongs to the peptidase A22B family. Glycosylated.

It is found in the endosome membrane. In terms of biological role, intramembrane-cleaving aspartic protease (I-CLiP) that cleaves type II membrane signal peptides in the hydrophobic plane of the membrane. The sequence is that of Signal peptide peptidase-like 5 (SPPL5) from Oryza sativa subsp. japonica (Rice).